The sequence spans 875 residues: GATOR2 complex protein MIOS (875 aa).

6 WD repeats span residues 61 to 100, 111 to 155, 182 to 221, 223 to 261, 265 to 306, and 395 to 437; these read PYMK…NSKF, KHAR…TPDI, GQND…QKMF, NTKA…KPVL, EQPK…TPIG, and RLRA…KQYT. The C4-type zinc finger occupies 735–781; sequence VSCNFCGKSISYSCSAVPHQGRGFSQYGVSGSPTKSKVTSCPGCRKP. 2 residues coordinate Zn(2+): C737 and C740. Residues S759 and S766 each carry the phosphoserine modification. Zn(2+)-binding residues include C775, C778, C788, C827, C830, H832, H835, H838, C849, C854, and C858. An RING-type; atypical zinc finger spans residues 782 to 863; it reads LPRCALCLIN…CTCKCMQLDT (82 aa).

It belongs to the WD repeat mio family. In terms of assembly, component of the GATOR2 subcomplex, composed of MIOS, SEC13, SEH1L, WDR24 and WDR59. The GATOR2 complex interacts with CASTOR1 and CASTOR2; the interaction is negatively regulated by arginine. CASTOR1 and CASTOR2 convey leucine availability via direct interaction with MIOS. The GATOR2 complex interacts with SESN1, SESN2 and SESN3; the interaction is negatively regulated by amino acids. Interacts with SAR1A and SAR1B; the interaction is direct, disrupted by leucine and mediates the interaction of SAR1A or SAR1B with the GATOR2 complex to negatively regulate the TORC1 signaling upon leucine deprivation.

It is found in the lysosome membrane. With respect to regulation, the GATOR2 complex is negatively regulated by the upstream amino acid sensors CASTOR1 and SESN2, which sequester the GATOR2 complex in absence of amino acids. In the presence of abundant amino acids, GATOR2 is released from CASTOR1 and SESN2 and activated. Functionally, as a component of the GATOR2 complex, functions as an activator of the amino acid-sensing branch of the mTORC1 signaling pathway. The GATOR2 complex indirectly activates mTORC1 through the inhibition of the GATOR1 subcomplex. GATOR2 probably acts as an E3 ubiquitin-protein ligase toward GATOR1. In the presence of abundant amino acids, the GATOR2 complex mediates ubiquitination of the NPRL2 core component of the GATOR1 complex, leading to GATOR1 inactivation. In the absence of amino acids, GATOR2 is inhibited, activating the GATOR1 complex. Within the GATOR2 complex, MIOS is required to prevent autoubiquitination of WDR24, the catalytic subunit of the complex. The GATOR2 complex is required for brain myelination. The sequence is that of GATOR2 complex protein MIOS from Pongo abelii (Sumatran orangutan).